A 275-amino-acid polypeptide reads, in one-letter code: Undecaprenyl-diphosphatase (275 aa).

A run of 7 helical transmembrane segments spans residues 8–28 (WTIVHYFVLGLVQGITEPIPI), 45–65 (ARGLSFEIFVNLASLLAVLII), 92–112 (FMFVVYLVLATIPVGIVGVLF), 119–139 (FIGEDGTTVVGITLLITAAAI), 197–217 (FSFLLYIPVSLGSSILEIPNI), 225–245 (ELWIPYLVAFITAFIASYFAL), and 255–275 (GNLKYFAYYCVIVGVLVLIFL).

The protein belongs to the UppP family.

It localises to the cell membrane. The enzyme catalyses di-trans,octa-cis-undecaprenyl diphosphate + H2O = di-trans,octa-cis-undecaprenyl phosphate + phosphate + H(+). In terms of biological role, catalyzes the dephosphorylation of undecaprenyl diphosphate (UPP). Confers resistance to bacitracin. The polypeptide is Undecaprenyl-diphosphatase (Oceanobacillus iheyensis (strain DSM 14371 / CIP 107618 / JCM 11309 / KCTC 3954 / HTE831)).